A 416-amino-acid polypeptide reads, in one-letter code: Cyclin-dependent kinase 8 (416 aa).

Positions 1–15 (MDYDFKVKLTGERER) are interaction with CCNC. Residues 21–287 (EYEGCKVGRG…SEQAMQDPYF (267 aa)) enclose the Protein kinase domain. Residues 27-35 (VGRGTYGHV) and Lys52 each bind ATP. The Proton acceptor role is filled by Asp151. Residues 313-416 (EEEPDDKGDK…PQYSHQTHRY (104 aa)) form a disordered region. Residues 325–343 (QQQQQGNNHTNGTGHPGNQ) show a composition bias toward low complexity. Composition is skewed to polar residues over residues 361-378 (PTTT…QRSN) and 386-416 (PGPS…THRY).

The protein belongs to the protein kinase superfamily. CMGC Ser/Thr protein kinase family. CDC2/CDKX subfamily. In terms of assembly, component of the Mediator complex. Interacts with ccnc. Mg(2+) is required as a cofactor.

The protein resides in the nucleus. It catalyses the reaction L-seryl-[protein] + ATP = O-phospho-L-seryl-[protein] + ADP + H(+). It carries out the reaction L-threonyl-[protein] + ATP = O-phospho-L-threonyl-[protein] + ADP + H(+). The enzyme catalyses [DNA-directed RNA polymerase] + ATP = phospho-[DNA-directed RNA polymerase] + ADP + H(+). Functionally, component of the Mediator complex, a coactivator involved in regulated gene transcription of nearly all RNA polymerase II-dependent genes. Mediator functions as a bridge to convey information from gene-specific regulatory proteins to the basal RNA polymerase II transcription machinery. Mediator is recruited to promoters by direct interactions with regulatory proteins and serves as a scaffold for the assembly of a functional pre-initiation complex with RNA polymerase II and the general transcription factors. Phosphorylates the CTD (C-terminal domain) of the large subunit of RNA polymerase II (RNAp II), which may inhibit the formation of a transcription initiation complex. In Xenopus laevis (African clawed frog), this protein is Cyclin-dependent kinase 8 (cdk8).